The sequence spans 320 residues: GTP 3',8-cyclase (320 aa).

The 221-residue stretch at 5 to 225 (QFGRKINYLR…IQLIKKDEKA (221 aa)) folds into the Radical SAM core domain. Arginine 14 contributes to the GTP binding site. [4Fe-4S] cluster contacts are provided by cysteine 21 and cysteine 25. Residue tyrosine 27 participates in S-adenosyl-L-methionine binding. Cysteine 28 provides a ligand contact to [4Fe-4S] cluster. Arginine 64 is a binding site for GTP. Glycine 68 contributes to the S-adenosyl-L-methionine binding site. Threonine 95 lines the GTP pocket. Serine 119 lines the S-adenosyl-L-methionine pocket. Position 155 (lysine 155) interacts with GTP. An S-adenosyl-L-methionine-binding site is contributed by methionine 189. [4Fe-4S] cluster contacts are provided by cysteine 248 and cysteine 251. 253–255 (RIR) is a binding site for GTP. [4Fe-4S] cluster is bound at residue cysteine 265.

It belongs to the radical SAM superfamily. MoaA family. Monomer and homodimer. [4Fe-4S] cluster is required as a cofactor.

The enzyme catalyses GTP + AH2 + S-adenosyl-L-methionine = (8S)-3',8-cyclo-7,8-dihydroguanosine 5'-triphosphate + 5'-deoxyadenosine + L-methionine + A + H(+). The protein operates within cofactor biosynthesis; molybdopterin biosynthesis. Its function is as follows. Catalyzes the cyclization of GTP to (8S)-3',8-cyclo-7,8-dihydroguanosine 5'-triphosphate. The polypeptide is GTP 3',8-cyclase (Campylobacter jejuni subsp. jejuni serotype O:6 (strain 81116 / NCTC 11828)).